Reading from the N-terminus, the 161-residue chain is 6,7-dimethyl-8-ribityllumazine synthase (161 aa).

Residues Trp26, 58-60 (SFE), and 81-83 (VVI) contribute to the 5-amino-6-(D-ribitylamino)uracil site. 86 to 87 (GT) provides a ligand contact to (2S)-2-hydroxy-3-oxobutyl phosphate. His89 acts as the Proton donor in catalysis. Phe114 contributes to the 5-amino-6-(D-ribitylamino)uracil binding site. Residue Arg128 coordinates (2S)-2-hydroxy-3-oxobutyl phosphate.

The protein belongs to the DMRL synthase family.

The enzyme catalyses (2S)-2-hydroxy-3-oxobutyl phosphate + 5-amino-6-(D-ribitylamino)uracil = 6,7-dimethyl-8-(1-D-ribityl)lumazine + phosphate + 2 H2O + H(+). It participates in cofactor biosynthesis; riboflavin biosynthesis; riboflavin from 2-hydroxy-3-oxobutyl phosphate and 5-amino-6-(D-ribitylamino)uracil: step 1/2. In terms of biological role, catalyzes the formation of 6,7-dimethyl-8-ribityllumazine by condensation of 5-amino-6-(D-ribitylamino)uracil with 3,4-dihydroxy-2-butanone 4-phosphate. This is the penultimate step in the biosynthesis of riboflavin. The chain is 6,7-dimethyl-8-ribityllumazine synthase from Streptomyces avermitilis (strain ATCC 31267 / DSM 46492 / JCM 5070 / NBRC 14893 / NCIMB 12804 / NRRL 8165 / MA-4680).